Reading from the N-terminus, the 313-residue chain is Ribosomal RNA small subunit methyltransferase H (313 aa).

S-adenosyl-L-methionine contacts are provided by residues 33 to 35, aspartate 53, phenylalanine 82, aspartate 103, and glutamine 110; that span reads AGH.

This sequence belongs to the methyltransferase superfamily. RsmH family.

It localises to the cytoplasm. It catalyses the reaction cytidine(1402) in 16S rRNA + S-adenosyl-L-methionine = N(4)-methylcytidine(1402) in 16S rRNA + S-adenosyl-L-homocysteine + H(+). In terms of biological role, specifically methylates the N4 position of cytidine in position 1402 (C1402) of 16S rRNA. The protein is Ribosomal RNA small subunit methyltransferase H of Ruminiclostridium cellulolyticum (strain ATCC 35319 / DSM 5812 / JCM 6584 / H10) (Clostridium cellulolyticum).